The following is a 366-amino-acid chain: UDP-N-acetylglucosamine--N-acetylmuramyl-(pentapeptide) pyrophosphoryl-undecaprenol N-acetylglucosamine transferase (366 aa).

UDP-N-acetyl-alpha-D-glucosamine contacts are provided by residues 14 to 16 (TGG), Asn128, Arg169, Ser201, Ile251, and Gln296.

Belongs to the glycosyltransferase 28 family. MurG subfamily.

Its subcellular location is the cell inner membrane. The catalysed reaction is di-trans,octa-cis-undecaprenyl diphospho-N-acetyl-alpha-D-muramoyl-L-alanyl-D-glutamyl-meso-2,6-diaminopimeloyl-D-alanyl-D-alanine + UDP-N-acetyl-alpha-D-glucosamine = di-trans,octa-cis-undecaprenyl diphospho-[N-acetyl-alpha-D-glucosaminyl-(1-&gt;4)]-N-acetyl-alpha-D-muramoyl-L-alanyl-D-glutamyl-meso-2,6-diaminopimeloyl-D-alanyl-D-alanine + UDP + H(+). It functions in the pathway cell wall biogenesis; peptidoglycan biosynthesis. Functionally, cell wall formation. Catalyzes the transfer of a GlcNAc subunit on undecaprenyl-pyrophosphoryl-MurNAc-pentapeptide (lipid intermediate I) to form undecaprenyl-pyrophosphoryl-MurNAc-(pentapeptide)GlcNAc (lipid intermediate II). This is UDP-N-acetylglucosamine--N-acetylmuramyl-(pentapeptide) pyrophosphoryl-undecaprenol N-acetylglucosamine transferase from Christiangramia forsetii (strain DSM 17595 / CGMCC 1.15422 / KT0803) (Gramella forsetii).